The following is a 226-amino-acid chain: Chalcone--flavanone isomerase (226 aa).

Positions 47, 112, and 189 each coordinate substrate.

This sequence belongs to the chalcone isomerase family.

The catalysed reaction is a chalcone = a flavanone.. It functions in the pathway secondary metabolite biosynthesis; flavonoid biosynthesis. Functionally, catalyzes the intramolecular cyclization of bicyclic chalcones into tricyclic (S)-flavanones. Responsible for the isomerization of 4,2',4',6'-tetrahydroxychalcone (also termed chalcone) into naringenin. This chain is Chalcone--flavanone isomerase (CHI), found in Allium cepa (Onion).